We begin with the raw amino-acid sequence, 179 residues long: Large ribosomal subunit protein uL5 (179 aa).

It belongs to the universal ribosomal protein uL5 family. Part of the 50S ribosomal subunit; part of the 5S rRNA/L5/L18/L25 subcomplex. Contacts the 5S rRNA and the P site tRNA. Forms a bridge to the 30S subunit in the 70S ribosome.

In terms of biological role, this is one of the proteins that bind and probably mediate the attachment of the 5S RNA into the large ribosomal subunit, where it forms part of the central protuberance. In the 70S ribosome it contacts protein S13 of the 30S subunit (bridge B1b), connecting the 2 subunits; this bridge is implicated in subunit movement. Contacts the P site tRNA; the 5S rRNA and some of its associated proteins might help stabilize positioning of ribosome-bound tRNAs. The sequence is that of Large ribosomal subunit protein uL5 from Clostridium botulinum (strain Alaska E43 / Type E3).